Here is a 429-residue protein sequence, read N- to C-terminus: Histidine--tRNA ligase (429 aa).

Belongs to the class-II aminoacyl-tRNA synthetase family. As to quaternary structure, homodimer.

Its subcellular location is the cytoplasm. It catalyses the reaction tRNA(His) + L-histidine + ATP = L-histidyl-tRNA(His) + AMP + diphosphate + H(+). The sequence is that of Histidine--tRNA ligase from Pseudomonas aeruginosa (strain LESB58).